A 306-amino-acid chain; its full sequence is UDP-N-acetylenolpyruvoylglucosamine reductase (306 aa).

In terms of domain architecture, FAD-binding PCMH-type spans 34 to 198 (VGGPADLLIT…LEVTFKLHNS (165 aa)). Arginine 177 is a catalytic residue. Residue serine 227 is the Proton donor of the active site. Residue glutamate 297 is part of the active site.

This sequence belongs to the MurB family. FAD serves as cofactor.

Its subcellular location is the cytoplasm. The enzyme catalyses UDP-N-acetyl-alpha-D-muramate + NADP(+) = UDP-N-acetyl-3-O-(1-carboxyvinyl)-alpha-D-glucosamine + NADPH + H(+). It participates in cell wall biogenesis; peptidoglycan biosynthesis. In terms of biological role, cell wall formation. This Clostridium botulinum (strain Okra / Type B1) protein is UDP-N-acetylenolpyruvoylglucosamine reductase.